Here is a 414-residue protein sequence, read N- to C-terminus: UDP-N-acetylglucosamine 1-carboxyvinyltransferase (414 aa).

Lys-19–Asn-20 serves as a coordination point for phosphoenolpyruvate. A UDP-N-acetyl-alpha-D-glucosamine-binding site is contributed by Arg-89. Cys-113 serves as the catalytic Proton donor. The residue at position 113 (Cys-113) is a 2-(S-cysteinyl)pyruvic acid O-phosphothioketal. UDP-N-acetyl-alpha-D-glucosamine is bound by residues Arg-118 to Leu-122, Asp-301, and Val-323.

This sequence belongs to the EPSP synthase family. MurA subfamily.

Its subcellular location is the cytoplasm. The catalysed reaction is phosphoenolpyruvate + UDP-N-acetyl-alpha-D-glucosamine = UDP-N-acetyl-3-O-(1-carboxyvinyl)-alpha-D-glucosamine + phosphate. It participates in cell wall biogenesis; peptidoglycan biosynthesis. Its function is as follows. Cell wall formation. Adds enolpyruvyl to UDP-N-acetylglucosamine. The chain is UDP-N-acetylglucosamine 1-carboxyvinyltransferase from Bdellovibrio bacteriovorus (strain ATCC 15356 / DSM 50701 / NCIMB 9529 / HD100).